The chain runs to 229 residues: 2,3-bisphosphoglycerate-dependent phosphoglycerate mutase 2 (229 aa).

Substrate is bound by residues 12 to 19 (RHGESVAN), 25 to 26 (TG), arginine 65, 92 to 95 (ERHY), lysine 103, and 119 to 120 (RR). Histidine 13 functions as the Tele-phosphohistidine intermediate in the catalytic mechanism. Glutamate 92 acts as the Proton donor/acceptor in catalysis.

The protein belongs to the phosphoglycerate mutase family. BPG-dependent PGAM subfamily.

It catalyses the reaction (2R)-2-phosphoglycerate = (2R)-3-phosphoglycerate. The protein operates within carbohydrate degradation; glycolysis; pyruvate from D-glyceraldehyde 3-phosphate: step 3/5. Functionally, catalyzes the interconversion of 2-phosphoglycerate and 3-phosphoglycerate. In Lactobacillus johnsonii (strain CNCM I-12250 / La1 / NCC 533), this protein is 2,3-bisphosphoglycerate-dependent phosphoglycerate mutase 2.